The chain runs to 378 residues: Peptide methionine sulfoxide reductase MsrA/MsrB (378 aa).

The peptide methionine sulfoxide reductase A stretch occupies residues 40–197 (QQATLAGGCF…KVRYNYYRYA (158 aa)). Cys-48 is an active-site residue. Residues 240–362 (DEQIRAKLTS…NSAAMRFIPK (123 aa)) enclose the MsrB domain. Residue Cys-351 is the Nucleophile of the active site.

The protein in the N-terminal section; belongs to the MsrA Met sulfoxide reductase family. It in the C-terminal section; belongs to the MsrB Met sulfoxide reductase family.

It carries out the reaction L-methionyl-[protein] + [thioredoxin]-disulfide + H2O = L-methionyl-(S)-S-oxide-[protein] + [thioredoxin]-dithiol. The catalysed reaction is [thioredoxin]-disulfide + L-methionine + H2O = L-methionine (S)-S-oxide + [thioredoxin]-dithiol. The enzyme catalyses L-methionyl-[protein] + [thioredoxin]-disulfide + H2O = L-methionyl-(R)-S-oxide-[protein] + [thioredoxin]-dithiol. Functionally, has an important function as a repair enzyme for proteins that have been inactivated by oxidation. Catalyzes the reversible oxidation-reduction of methionine sulfoxide in proteins to methionine. In Vibrio cholerae serotype O1 (strain ATCC 39315 / El Tor Inaba N16961), this protein is Peptide methionine sulfoxide reductase MsrA/MsrB (msrAB).